A 204-amino-acid chain; its full sequence is Glycerol-3-phosphate acyltransferase (204 aa).

5 helical membrane passes run 8 to 28, 53 to 73, 81 to 101, 116 to 136, and 155 to 175; these read ILIFAYLLGSINSAIIVCYIF, VPAAITLIFDILKGLVPVVIA, FITACTALYAILGHIFPIFFG, FGFSWILGLIFVITWLCVAII, and VIFTSDLQVAAPFLIIAIIIL.

This sequence belongs to the PlsY family. Probably interacts with PlsX.

It localises to the cell inner membrane. It catalyses the reaction an acyl phosphate + sn-glycerol 3-phosphate = a 1-acyl-sn-glycero-3-phosphate + phosphate. Its pathway is lipid metabolism; phospholipid metabolism. Functionally, catalyzes the transfer of an acyl group from acyl-phosphate (acyl-PO(4)) to glycerol-3-phosphate (G3P) to form lysophosphatidic acid (LPA). This enzyme utilizes acyl-phosphate as fatty acyl donor, but not acyl-CoA or acyl-ACP. The protein is Glycerol-3-phosphate acyltransferase of Francisella tularensis subsp. tularensis (strain FSC 198).